The chain runs to 460 residues: ATP synthase subunit beta (460 aa).

Position 150–157 (150–157 (GGAGVGKT)) interacts with ATP.

Belongs to the ATPase alpha/beta chains family. F-type ATPases have 2 components, CF(1) - the catalytic core - and CF(0) - the membrane proton channel. CF(1) has five subunits: alpha(3), beta(3), gamma(1), delta(1), epsilon(1). CF(0) has three main subunits: a(1), b(2) and c(9-12). The alpha and beta chains form an alternating ring which encloses part of the gamma chain. CF(1) is attached to CF(0) by a central stalk formed by the gamma and epsilon chains, while a peripheral stalk is formed by the delta and b chains.

It localises to the cell inner membrane. The enzyme catalyses ATP + H2O + 4 H(+)(in) = ADP + phosphate + 5 H(+)(out). Functionally, produces ATP from ADP in the presence of a proton gradient across the membrane. The catalytic sites are hosted primarily by the beta subunits. This is ATP synthase subunit beta from Yersinia pestis bv. Antiqua (strain Angola).